An 855-amino-acid polypeptide reads, in one-letter code: DNA mismatch repair protein MutS (855 aa).

ATP is bound at residue 616-623 (GPNMGGKS).

The protein belongs to the DNA mismatch repair MutS family.

Functionally, this protein is involved in the repair of mismatches in DNA. It is possible that it carries out the mismatch recognition step. This protein has a weak ATPase activity. In Salmonella newport (strain SL254), this protein is DNA mismatch repair protein MutS.